Here is a 155-residue protein sequence, read N- to C-terminus: MGVTSYTHETTTPIAPTRLFKALVVDSDNLIPKLMPQVKNIEAEGDGSIKKMNFVEGSPIKYLKHKIHVVDDKNLVTKYSMIEGDVLGDKLESISYDLKFEAHGNGGCVCKSITEYHTKGDYVLKDEEHNEGQKQGMELFKIVEAYLLANPSVYA.

The protein belongs to the BetVI family.

This is Pathogenesis-related protein STH-2 (STH-2) from Solanum tuberosum (Potato).